The primary structure comprises 544 residues: 4-coumarate:CoA ligase 1 (544 aa).

It belongs to the ATP-dependent AMP-binding enzyme family. In terms of assembly, monomer. As to expression, mostly expressed in flower organs, with highest levels in corollas, and, to a lesser extent, in tubes, sepals, pistils, stamen and ovaries. Also present at low levels in leaves.

The protein resides in the cytoplasm. It is found in the cytosol. The enzyme catalyses (E)-4-coumarate + ATP + CoA = (E)-4-coumaroyl-CoA + AMP + diphosphate. It carries out the reaction (E)-caffeate + ATP + CoA = (E)-caffeoyl-CoA + AMP + diphosphate. It catalyses the reaction benzoate + ATP + CoA = benzoyl-CoA + AMP + diphosphate. The catalysed reaction is (E)-cinnamate + ATP + CoA = (E)-cinnamoyl-CoA + AMP + diphosphate. The enzyme catalyses (E)-ferulate + ATP + CoA = (E)-feruloyl-CoA + AMP + diphosphate. Its pathway is phenylpropanoid metabolism; trans-cinnamate biosynthesis. The protein operates within phytoalexin biosynthesis; 3,4',5-trihydroxystilbene biosynthesis; 3,4',5-trihydroxystilbene from trans-4-coumarate: step 1/2. In terms of biological role, catalyzes the formation of CoA esters of trans-cinnamic acid, 4-coumaric acid, ferulic acid, benzoic acid and caffeic acid. The polypeptide is 4-coumarate:CoA ligase 1 (Petunia hybrida (Petunia)).